A 212-amino-acid chain; its full sequence is Thiamine-phosphate synthase (212 aa).

4-amino-2-methyl-5-(diphosphooxymethyl)pyrimidine contacts are provided by residues Gln35–Lys39 and Asn67. 2 residues coordinate Mg(2+): Asp68 and Asp87. Residue Ser106 coordinates 4-amino-2-methyl-5-(diphosphooxymethyl)pyrimidine. Thr132–Ser134 is a binding site for 2-[(2R,5Z)-2-carboxy-4-methylthiazol-5(2H)-ylidene]ethyl phosphate. Lys135 contacts 4-amino-2-methyl-5-(diphosphooxymethyl)pyrimidine. 2-[(2R,5Z)-2-carboxy-4-methylthiazol-5(2H)-ylidene]ethyl phosphate-binding positions include Gly163 and Ile183–Ser184.

It belongs to the thiamine-phosphate synthase family. Mg(2+) is required as a cofactor.

The catalysed reaction is 2-[(2R,5Z)-2-carboxy-4-methylthiazol-5(2H)-ylidene]ethyl phosphate + 4-amino-2-methyl-5-(diphosphooxymethyl)pyrimidine + 2 H(+) = thiamine phosphate + CO2 + diphosphate. The enzyme catalyses 2-(2-carboxy-4-methylthiazol-5-yl)ethyl phosphate + 4-amino-2-methyl-5-(diphosphooxymethyl)pyrimidine + 2 H(+) = thiamine phosphate + CO2 + diphosphate. It catalyses the reaction 4-methyl-5-(2-phosphooxyethyl)-thiazole + 4-amino-2-methyl-5-(diphosphooxymethyl)pyrimidine + H(+) = thiamine phosphate + diphosphate. Its pathway is cofactor biosynthesis; thiamine diphosphate biosynthesis; thiamine phosphate from 4-amino-2-methyl-5-diphosphomethylpyrimidine and 4-methyl-5-(2-phosphoethyl)-thiazole: step 1/1. Its function is as follows. Condenses 4-methyl-5-(beta-hydroxyethyl)thiazole monophosphate (THZ-P) and 2-methyl-4-amino-5-hydroxymethyl pyrimidine pyrophosphate (HMP-PP) to form thiamine monophosphate (TMP). The chain is Thiamine-phosphate synthase from Methanocella arvoryzae (strain DSM 22066 / NBRC 105507 / MRE50).